A 145-amino-acid chain; its full sequence is UPF0179 protein TV1250 (145 aa).

Belongs to the UPF0179 family.

In Thermoplasma volcanium (strain ATCC 51530 / DSM 4299 / JCM 9571 / NBRC 15438 / GSS1), this protein is UPF0179 protein TV1250.